A 166-amino-acid chain; its full sequence is Large ribosomal subunit protein uL10 (166 aa).

The protein belongs to the universal ribosomal protein uL10 family. Part of the ribosomal stalk of the 50S ribosomal subunit. The N-terminus interacts with L11 and the large rRNA to form the base of the stalk. The C-terminus forms an elongated spine to which L12 dimers bind in a sequential fashion forming a multimeric L10(L12)X complex.

Functionally, forms part of the ribosomal stalk, playing a central role in the interaction of the ribosome with GTP-bound translation factors. In Pseudomonas fluorescens (strain ATCC BAA-477 / NRRL B-23932 / Pf-5), this protein is Large ribosomal subunit protein uL10.